The chain runs to 36 residues: Asteropin-A (36 aa).

3 cysteine pairs are disulfide-bonded: Cys-2/Cys-18, Cys-9/Cys-25, and Cys-17/Cys-35.

Sialidase inhibitor. Competitively inhibits bacterial sialidases, but not viral sialidases. Does not inhibit glycosidases or proteases. Has no antitumor activity. The protein is Asteropin-A of Asteropus simplex (Marine sponge).